A 94-amino-acid polypeptide reads, in one-letter code: Co-chaperonin GroES (94 aa).

The protein belongs to the GroES chaperonin family. Heptamer of 7 subunits arranged in a ring. Interacts with the chaperonin GroEL.

The protein resides in the cytoplasm. Its function is as follows. Together with the chaperonin GroEL, plays an essential role in assisting protein folding. The GroEL-GroES system forms a nano-cage that allows encapsulation of the non-native substrate proteins and provides a physical environment optimized to promote and accelerate protein folding. GroES binds to the apical surface of the GroEL ring, thereby capping the opening of the GroEL channel. This chain is Co-chaperonin GroES, found in Clostridium perfringens (strain ATCC 13124 / DSM 756 / JCM 1290 / NCIMB 6125 / NCTC 8237 / Type A).